The chain runs to 729 residues: Fatty acid oxidation complex subunit alpha (729 aa).

Residues Met1 to Lys189 form an enoyl-CoA hydratase/isomerase region. Asp296 contacts substrate. The tract at residues Glu311–Ala729 is 3-hydroxyacyl-CoA dehydrogenase. NAD(+)-binding positions include Met324, Asp343, Val400–Glu402, Lys407, and Ser429. His450 serves as the catalytic For 3-hydroxyacyl-CoA dehydrogenase activity. Asn453 lines the NAD(+) pocket. Residues Asn500 and Tyr660 each contribute to the substrate site. The tract at residues Arg708–Ala729 is disordered.

The protein in the N-terminal section; belongs to the enoyl-CoA hydratase/isomerase family. It in the C-terminal section; belongs to the 3-hydroxyacyl-CoA dehydrogenase family. Heterotetramer of two alpha chains (FadB) and two beta chains (FadA).

The catalysed reaction is a (3S)-3-hydroxyacyl-CoA + NAD(+) = a 3-oxoacyl-CoA + NADH + H(+). It catalyses the reaction a (3S)-3-hydroxyacyl-CoA = a (2E)-enoyl-CoA + H2O. The enzyme catalyses a 4-saturated-(3S)-3-hydroxyacyl-CoA = a (3E)-enoyl-CoA + H2O. It carries out the reaction (3S)-3-hydroxybutanoyl-CoA = (3R)-3-hydroxybutanoyl-CoA. The catalysed reaction is a (3Z)-enoyl-CoA = a 4-saturated (2E)-enoyl-CoA. It catalyses the reaction a (3E)-enoyl-CoA = a 4-saturated (2E)-enoyl-CoA. It participates in lipid metabolism; fatty acid beta-oxidation. Its function is as follows. Involved in the aerobic and anaerobic degradation of long-chain fatty acids via beta-oxidation cycle. Catalyzes the formation of 3-oxoacyl-CoA from enoyl-CoA via L-3-hydroxyacyl-CoA. It can also use D-3-hydroxyacyl-CoA and cis-3-enoyl-CoA as substrate. The sequence is that of Fatty acid oxidation complex subunit alpha from Escherichia coli O8 (strain IAI1).